The chain runs to 187 residues: MKISGVDIRPGNIIEYEGGIWKVAKIQHTQPGKGGAYMQVEMKNLQDGRKTNVRFRSADTVEKVRLDTQDYQFLYEDGDQLVFMDQDTYEQINLDSDLLGDARPFLQDGMTVQLELWEEKPISVQLPQQVEADIVEADAVVKGQTASSSYKPAVLDNGVRIMVPPHIESGTRIVVDVYEQTYVGKAG.

Belongs to the elongation factor P family.

It localises to the cytoplasm. The protein operates within protein biosynthesis; polypeptide chain elongation. Functionally, involved in peptide bond synthesis. Stimulates efficient translation and peptide-bond synthesis on native or reconstituted 70S ribosomes in vitro. Probably functions indirectly by altering the affinity of the ribosome for aminoacyl-tRNA, thus increasing their reactivity as acceptors for peptidyl transferase. The chain is Elongation factor P from Erythrobacter litoralis (strain HTCC2594).